A 592-amino-acid chain; its full sequence is Salivary peroxidase/catechol oxidase (592 aa).

The signal sequence occupies residues 1–21 (MWMFLKLLLFVCSSWWSCAQA). A disulfide bridge connects residues Cys24 and Cys37. Asn25 is a glycosylation site (N-linked (GlcNAc...) asparagine). Catalysis depends on His110, which acts as the Proton acceptor. The Ca(2+) site is built by Asp111, Thr187, Phe189, Asp191, and Ser193. N-linked (GlcNAc...) asparagine glycosylation occurs at Asn230. A disulfide bond links Cys235 and Cys244. His353 is a binding site for heme b. The N-linked (GlcNAc...) asparagine glycan is linked to Asn366. Cystine bridges form between Cys452–Cys509 and Cys553–Cys580.

The protein belongs to the peroxidase family. XPO subfamily. Female salivary gland.

The protein resides in the secreted. The enzyme catalyses 2 catechol + O2 = 2 1,2-benzoquinone + 2 H2O. Its function is as follows. Inhibits noradrenaline-induced smooth muscle contraction in the host, probably due to the oxidation of noradrenaline, resulting in vasodilation. Exhibits peroxidase activity. This Anopheles albimanus (New world malaria mosquito) protein is Salivary peroxidase/catechol oxidase.